Here is a 328-residue protein sequence, read N- to C-terminus: Methionyl-tRNA formyltransferase (328 aa).

110–113 (SNLP) contacts (6S)-5,6,7,8-tetrahydrofolate.

This sequence belongs to the Fmt family.

The enzyme catalyses L-methionyl-tRNA(fMet) + (6R)-10-formyltetrahydrofolate = N-formyl-L-methionyl-tRNA(fMet) + (6S)-5,6,7,8-tetrahydrofolate + H(+). Functionally, attaches a formyl group to the free amino group of methionyl-tRNA(fMet). The formyl group appears to play a dual role in the initiator identity of N-formylmethionyl-tRNA by promoting its recognition by IF2 and preventing the misappropriation of this tRNA by the elongation apparatus. This Bifidobacterium longum (strain DJO10A) protein is Methionyl-tRNA formyltransferase.